The primary structure comprises 314 residues: MEKPFGFVVIDKPSGLTSHDCVNRLRKVFGIKKIGHSGTLDPAVTGVLPIAIGDATRLISYLQGSKAYRGIIQLGATTNTDDMQGEIIESKAWPLITQNYINYLLENFRGEILQKPPIFSSVHIKGERAYKKARKGEKFDLIPKKVTINKLNLISWSQDKGELLVDVDCSTGTYIRSLARDIGDKIGCGGYLKSLRRTKAYNFIENHSVKLPEKSDFYPEGDKPKVLNPNIFFKHLSSFELISEEEIISWRSGRKISFQNNVKRLKVTKNNEVEDSFIHNNHILVLNKENKILGIACLDDSFAIKPKVVFNAIG.

Asp-41 acts as the Nucleophile in catalysis.

Belongs to the pseudouridine synthase TruB family. Type 1 subfamily.

It catalyses the reaction uridine(55) in tRNA = pseudouridine(55) in tRNA. Functionally, responsible for synthesis of pseudouridine from uracil-55 in the psi GC loop of transfer RNAs. In Prochlorococcus marinus (strain NATL2A), this protein is tRNA pseudouridine synthase B.